The primary structure comprises 413 residues: MNIPPELTFEVLVRLPLKSLARFRSVRKEWKLVIDSEFFRDCFMSHNSSSVSWSIIQTRPHKLTLEIVGHHGCKTWGLTRSPGSLVGFFADTTIKRLRVLACTDGLVLIYTETSYGTPMHYVGNPLFQEWCPIPLPSYFYLQSVERIRNHQRFNDSALVIKMQSGAVVSYKVVWLFPRNSTTIDFLIYSSDTGMWEARIATCLHSSFWFSHHKPIALNGILHWLCNFSTSFVAYDFYGGHDDYACHIISFPDCEKDDDQLRRFRRTLSTSDGSIVYFNEFGENGNRRLRVWRLVKYTGGPEAWQLFWEVSLASVTKLGIDYFPVVMHPLKSEIIYLWSRNKKGMVLFNLRTNVFSLHKESEDETKCMDGCTLSFNRCSEYMETIHNYGGPNYLLASQYVLPRWLHRLPRPQPS.

Residues 1 to 42 (MNIPPELTFEVLVRLPLKSLARFRSVRKEWKLVIDSEFFRDC) form the F-box domain.

The chain is Putative F-box protein At3g23970 from Arabidopsis thaliana (Mouse-ear cress).